The chain runs to 100 residues: Tachykinin-4 (100 aa).

Positions 1–19 (MPSSVTLLLLMGLSVCTSA) are cleaved as a signal peptide. 2 consecutive propeptides follow at residues 20-55 (EDGG…LQEV) and 85-100 (RASS…QGAE). The segment at 80–100 (GLLGRRASSTKGSVDEDQGAE) is disordered.

This sequence belongs to the tachykinin family.

The protein localises to the secreted. Tachykinins are active peptides which excite neurons, evoke behavioral responses, are potent vasodilators and secretagogues, and contract (directly or indirectly) many smooth muscles. In Oryctolagus cuniculus (Rabbit), this protein is Tachykinin-4.